A 199-amino-acid polypeptide reads, in one-letter code: Recombination protein RecR (199 aa).

The C4-type zinc finger occupies 57–72; that stretch reads CQSCRTYTEETLCPIC. The 96-residue stretch at 81 to 176 folds into the Toprim domain; the sequence is STICVVETPA…MISRIAHGVP (96 aa).

The protein belongs to the RecR family.

In terms of biological role, may play a role in DNA repair. It seems to be involved in an RecBC-independent recombinational process of DNA repair. It may act with RecF and RecO. The protein is Recombination protein RecR of Shewanella baltica (strain OS155 / ATCC BAA-1091).